The primary structure comprises 158 residues: Peroxidase (158 aa).

Proline 2 contributes to the substrate binding site. Histidine 32 lines the heme b pocket. Residue threonine 33 coordinates Ca(2+). Cysteine 39 and cysteine 64 are disulfide-bonded. N-linked (GlcNAc...) asparagine glycosylation occurs at asparagine 48. Residues aspartate 78, threonine 81, and aspartate 86 each contribute to the Ca(2+) site.

It belongs to the peroxidase family. Classical plant (class III) peroxidase subfamily. Ca(2+) is required as a cofactor. The cofactor is heme b.

It carries out the reaction 2 a phenolic donor + H2O2 = 2 a phenolic radical donor + 2 H2O. Removal of H(2)O(2), oxidation of toxic reductants, biosynthesis and degradation of lignin, suberization, auxin catabolism, response to environmental stresses such as wounding, pathogen attack and oxidative stress. These functions might be dependent on each isozyme/isoform in each plant tissue. In Lupinus polyphyllus (Large-leaved lupine), this protein is Peroxidase.